Consider the following 205-residue polypeptide: Urease accessory protein UreG (205 aa).

11-18 (GPVGSGKT) contributes to the GTP binding site.

It belongs to the SIMIBI class G3E GTPase family. UreG subfamily. In terms of assembly, homodimer. UreD, UreF and UreG form a complex that acts as a GTP-hydrolysis-dependent molecular chaperone, activating the urease apoprotein by helping to assemble the nickel containing metallocenter of UreC. The UreE protein probably delivers the nickel.

It localises to the cytoplasm. Its function is as follows. Facilitates the functional incorporation of the urease nickel metallocenter. This process requires GTP hydrolysis, probably effectuated by UreG. This Prochlorococcus marinus (strain NATL2A) protein is Urease accessory protein UreG.